The following is a 218-amino-acid chain: MAMITRNTATRLPLLLQSQRAVAAASVSHLHTSLPALSPSTSPTSYTRPGPPSTSPPPPGLSKAAEFVISKVDDLMNWARTGSIWPMTFGLACCAVEMMHTGAARYDLDRFGIIFRPSPRQSDCMIVAGTLTNKMAPALRKVYDQMPEPRWVISMGSCANGGGYYHYSYSVVRGCDRIVPVDIYVPGCPPTAEALLYGLLQLQKKINRRKDFLHWWNK.

A compositionally biased stretch (low complexity) spans 34–48 (LPALSPSTSPTSYTR). Positions 34–61 (LPALSPSTSPTSYTRPGPPSTSPPPPGL) are disordered. The span at 49-60 (PGPPSTSPPPPG) shows a compositional bias: pro residues. [4Fe-4S] cluster-binding residues include cysteine 93, cysteine 94, cysteine 158, and cysteine 188.

The protein belongs to the complex I 20 kDa subunit family. As to quaternary structure, complex I is composed of at least 49 different subunits. This is a component of the iron-sulfur (IP) fragment of the enzyme. [4Fe-4S] cluster is required as a cofactor.

The protein resides in the mitochondrion. The enzyme catalyses a ubiquinone + NADH + 5 H(+)(in) = a ubiquinol + NAD(+) + 4 H(+)(out). Functionally, core subunit of the mitochondrial membrane respiratory chain NADH dehydrogenase (Complex I) that is believed to belong to the minimal assembly required for catalysis. Complex I functions in the transfer of electrons from NADH to the respiratory chain. The immediate electron acceptor for the enzyme is believed to be ubiquinone. This is NADH dehydrogenase [ubiquinone] iron-sulfur protein 7, mitochondrial from Arabidopsis thaliana (Mouse-ear cress).